Reading from the N-terminus, the 149-residue chain is Large ribosomal subunit protein uL15 (149 aa).

Positions 1-61 are disordered; the sequence is MELNSLRPAL…GGQMPLQRRL (61 aa). Over residues 30–39 the composition is skewed to basic residues; sequence TATKGHKGQK.

The protein belongs to the universal ribosomal protein uL15 family. In terms of assembly, part of the 50S ribosomal subunit.

Functionally, binds to the 23S rRNA. This Trichlorobacter lovleyi (strain ATCC BAA-1151 / DSM 17278 / SZ) (Geobacter lovleyi) protein is Large ribosomal subunit protein uL15.